The following is a 646-amino-acid chain: Epithelial sodium channel subunit beta-2 (646 aa).

Topologically, residues 1–57 (MIQGKLKRLKRYFTRALHRIQKGPGYTYKELLVWFCDNTNTHGPKRIIKEGPKKRVM) are cytoplasmic. Residues 58 to 78 (WFILTLVFAGLVFWQWGLLIL) traverse the membrane as a helical segment. Residues 79 to 551 (TYLSYGVSVS…GGQFGFWMGG (473 aa)) are Extracellular-facing. Intrachain disulfides connect cysteine 104–cysteine 290, cysteine 214–cysteine 221, cysteine 267–cysteine 274, cysteine 380–cysteine 467, cysteine 405–cysteine 463, cysteine 409–cysteine 459, cysteine 418–cysteine 445, and cysteine 420–cysteine 434. The chain crosses the membrane as a helical span at residues 552–572 (SVLCIIEFGEIIIDCMWITIL). Residues 573-646 (KLLAWIRNRR…IEPVSSDEEN (74 aa)) are Cytoplasmic-facing. Residues 586-646 (QRPQYADPPP…IEPVSSDEEN (61 aa)) form a disordered region. Basic and acidic residues predominate over residues 610 to 619 (QHDDGNHVTE).

It belongs to the amiloride-sensitive sodium channel (TC 1.A.6) family. SCNN1B subfamily. Component of the heterotrimeric epithelial sodium channel (ENaC) composed of an alpha/SCNN1A, a beta/SCNN1B and a gamma/SCNN1G subunit.

The protein resides in the apical cell membrane. It localises to the cytoplasmic vesicle membrane. It catalyses the reaction Na(+)(in) = Na(+)(out). With respect to regulation, originally identified and characterized by its inhibition by the diuretic drug amiloride. In terms of biological role, this is one of the three pore-forming subunits of the heterotrimeric epithelial sodium channel (ENaC), a critical regulator of sodium balance and fluid homeostasis. ENaC operates in epithelial tissues, where it mediates the electrodiffusion of sodium ions from extracellular fluid through the apical membrane of cells, with water following osmotically. The polypeptide is Epithelial sodium channel subunit beta-2 (scnn1b-b) (Xenopus laevis (African clawed frog)).